The sequence spans 860 residues: Semaphorin-3aa (860 aa).

Positions 1–17 (MDYLVGIFLLLCGVALP) are cleaved as a signal peptide. A Sema domain is found at 31–515 (RLKLSYNEML…SDLGISQMPL (485 aa)). Asn-53 carries an N-linked (GlcNAc...) asparagine glycan. Cys-104 and Cys-115 are oxidised to a cystine. The N-linked (GlcNAc...) asparagine glycan is linked to Asn-126. Cystine bridges form between Cys-133-Cys-142, Cys-270-Cys-382, Cys-294-Cys-342, and Cys-518-Cys-536. In terms of domain architecture, Ig-like C2-type spans 579-668 (GYSSVEERSV…FIQPLRRINL (90 aa)). Asn-593 carries N-linked (GlcNAc...) asparagine glycosylation. Cys-652 and Cys-717 are oxidised to a cystine. A disordered region spans residues 725-860 (KKPKGKKAPK…HEQQRPPRSV (136 aa)). Composition is skewed to polar residues over residues 748 to 764 (TPQT…QRAQ) and 782 to 818 (TGLQ…QPNQ). The span at 838 to 860 (QLQENKRGRNRRTHEQQRPPRSV) shows a compositional bias: basic and acidic residues.

This sequence belongs to the semaphorin family.

It is found in the secreted. Its function is as follows. May influence outgrowth by a variety of growth cones including those of the posterior lateral line ganglion. This is Semaphorin-3aa (sema3aa) from Danio rerio (Zebrafish).